The following is a 118-amino-acid chain: Late cornified envelope protein 5A (118 aa).

Residues 1-10 (MSCQQSQQQC) are compositionally biased toward low complexity. 2 disordered regions span residues 1–32 (MSCQ…PPKC) and 72–118 (HRPR…GGCC). The span at 11 to 32 (QPPPKCTPKCPPKCTPKCPPKC) shows a compositional bias: pro residues. Over residues 72 to 82 (HRPRQSLRRRP) the composition is skewed to basic residues. Low complexity predominate over residues 97 to 118 (GGSSCCHSSGGSGCCHSSGGCC).

It belongs to the LCE family. Interacts with CYSRT1; the interaction is direct. In terms of tissue distribution, skin-specific. Expression was readily detected in adult trunk skin, adult arm skin, fetal skin, penal skin, vulva, esophagus and tongue. Not expressed in the cervix, rectum, lung, colon, or placenta. Expression is observed in the heart.

Functionally, precursors of the cornified envelope of the stratum corneum. This is Late cornified envelope protein 5A (LCE5A) from Homo sapiens (Human).